The primary structure comprises 291 residues: uncharacterized protein (291 aa).

Essential for virus function. This is an uncharacterized protein from Sulfolobus spindle-shape virus 1 (SSV1).